A 92-amino-acid chain; its full sequence is Plasmid copy control protein CopR (92 aa).

Residues 1 to 27 (MELAFRESLKKMRGTKSKEKFSQELEM) are compositionally biased toward basic and acidic residues. Disordered stretches follow at residues 1 to 40 (MELA…SGKS) and 63 to 92 (IPNE…NDFV). In terms of domain architecture, HTH cro/C1-type spans 9–62 (LKKMRGTKSKEKFSQELEMSRSNYSRIESGKSDPTIKTLEQIVKLTNSTLVVDL). Positions 20–39 (KFSQELEMSRSNYSRIESGK) form a DNA-binding region, H-T-H motif.

Its function is as follows. Involved in copy control of plasmid pIP501. This is Plasmid copy control protein CopR (copR) from Streptococcus agalactiae.